A 394-amino-acid polypeptide reads, in one-letter code: Elongation factor Tu 2 (394 aa).

Residues 10–204 enclose the tr-type G domain; it reads KPHVNVGTIG…ALDSYIPQPE (195 aa). The segment at 19 to 26 is G1; that stretch reads GHVDHGKT. Residue 19-26 coordinates GTP; the sequence is GHVDHGKT. Residue Thr-26 participates in Mg(2+) binding. Residues 60 to 64 are G2; the sequence is GITIN. Residues 81–84 are G3; sequence DCPG. GTP-binding positions include 81 to 85 and 136 to 139; these read DCPGH and NKCD. A G4 region spans residues 136–139; sequence NKCD. The tract at residues 174–176 is G5; sequence SAL.

Belongs to the TRAFAC class translation factor GTPase superfamily. Classic translation factor GTPase family. EF-Tu/EF-1A subfamily. Monomer.

It localises to the cytoplasm. The enzyme catalyses GTP + H2O = GDP + phosphate + H(+). Its function is as follows. GTP hydrolase that promotes the GTP-dependent binding of aminoacyl-tRNA to the A-site of ribosomes during protein biosynthesis. This Yersinia pestis bv. Antiqua (strain Antiqua) protein is Elongation factor Tu 2.